The sequence spans 362 residues: Formate dehydrogenase (362 aa).

Substrate-binding residues include Val-93 and Asn-119. Residues 174–175, Asp-195, 230–234, Thr-256, Asp-282, 311–314, and Ser-357 each bind NAD(+); these read RI, PLHAG, and HYSG.

This sequence belongs to the D-isomer specific 2-hydroxyacid dehydrogenase family. FDH subfamily. In terms of assembly, homodimer.

It localises to the cytoplasm. It carries out the reaction formate + NAD(+) = CO2 + NADH. In terms of biological role, catalyzes the NAD(+)-dependent oxidation of formate to carbon dioxide. Formate oxidation is the final step in the methanol oxidation pathway in methylotrophic microorganisms. Has a role in the detoxification of exogenous formate in non-methylotrophic organisms. The polypeptide is Formate dehydrogenase (Pichia angusta (Yeast)).